The sequence spans 635 residues: Early transcription factor 70 kDa subunit (635 aa).

The 154-residue stretch at 32–185 (RSIIDENKSV…SNIISLMSDE (154 aa)) folds into the Helicase ATP-binding domain. Residue 45 to 52 (HIMGSGKT) coordinates ATP. The short motif at 135–138 (DEAH) is the DEXH box element. Residues 326–505 (KFKYFITKIE…TLPFDIKKLL (180 aa)) enclose the Helicase C-terminal domain.

This sequence belongs to the helicase family. VETF subfamily. Heterodimer of a 70 kDa and a 82 kDa subunit. Part of the early transcription complex composed of ETF, RAP94, and the DNA-directed RNA polymerase.

The protein localises to the virion. Functionally, acts with RNA polymerase to initiate transcription from early gene promoters. Is recruited by the RPO-associated protein of 94 kDa (RAP94) to form the early transcription complex, which also contains the core RNA polymerase. ETF heterodimer binds to early gene promoters. This chain is Early transcription factor 70 kDa subunit (VETFS), found in Oryctolagus cuniculus (Rabbit).